The chain runs to 413 residues: 1-deoxy-D-xylulose 5-phosphate reductoisomerase (413 aa).

Residues Thr-21, Gly-22, Ser-23, Ile-24, Gly-47, and Asn-127 each contribute to the NADPH site. Position 128 (Lys-128) interacts with 1-deoxy-D-xylulose 5-phosphate. Glu-129 serves as a coordination point for NADPH. Asp-151 provides a ligand contact to Mn(2+). Ser-152, Glu-153, Ser-177, and His-200 together coordinate 1-deoxy-D-xylulose 5-phosphate. Glu-153 contributes to the Mn(2+) binding site. Gly-206 provides a ligand contact to NADPH. 4 residues coordinate 1-deoxy-D-xylulose 5-phosphate: Ser-213, Asn-218, Lys-219, and Glu-222. Glu-222 contacts Mn(2+).

It belongs to the DXR family. Requires Mg(2+) as cofactor. It depends on Mn(2+) as a cofactor.

It carries out the reaction 2-C-methyl-D-erythritol 4-phosphate + NADP(+) = 1-deoxy-D-xylulose 5-phosphate + NADPH + H(+). The protein operates within isoprenoid biosynthesis; isopentenyl diphosphate biosynthesis via DXP pathway; isopentenyl diphosphate from 1-deoxy-D-xylulose 5-phosphate: step 1/6. In terms of biological role, catalyzes the NADPH-dependent rearrangement and reduction of 1-deoxy-D-xylulose-5-phosphate (DXP) to 2-C-methyl-D-erythritol 4-phosphate (MEP). This Mycobacterium bovis (strain ATCC BAA-935 / AF2122/97) protein is 1-deoxy-D-xylulose 5-phosphate reductoisomerase.